Here is a 210-residue protein sequence, read N- to C-terminus: N-(5'-phosphoribosyl)anthranilate isomerase (210 aa).

Belongs to the TrpF family.

The catalysed reaction is N-(5-phospho-beta-D-ribosyl)anthranilate = 1-(2-carboxyphenylamino)-1-deoxy-D-ribulose 5-phosphate. It participates in amino-acid biosynthesis; L-tryptophan biosynthesis; L-tryptophan from chorismate: step 3/5. This is N-(5'-phosphoribosyl)anthranilate isomerase from Staphylococcus aureus (strain Mu3 / ATCC 700698).